The primary structure comprises 214 residues: uncharacterized protein (214 aa).

2 helical membrane-spanning segments follow: residues 23–43 (ILVG…VAAA) and 65–85 (VLYA…PVLL). The tract at residues 96 to 115 (ATRPTGASVRGGRSIGSGHP) is disordered. 2 helical membrane passes run 152–172 (VVLT…TYLM) and 181–201 (WISY…EWLY).

Its subcellular location is the cell membrane. This is an uncharacterized protein from Mycobacterium tuberculosis (strain CDC 1551 / Oshkosh).